Reading from the N-terminus, the 288-residue chain is MAEKKQWHETLHDQFGQYFAVDNVLYHEKTDHQDLIIFENAAFGRVMALDGVVQTTERDEFIYHEMMTHVPLLAHGHAKHVLIIGGGDGAMLREVTRHKNVESITMVEIDAGVVSFCRQYLPNHNAGSYDDPRFKLVIDDGVNFVNQTNQTFDVIISDCTDPIGPGESLFTSAFYEGCKRCLNPGGIFVAQNGVCFLQQEEAIDSHRKLSHYFSDVGFYQAAIPTYYGGIMTFAWATDNDALRHLSTEIIQARFLASGLKCRYYNPAVHTAAFALPQYLQDALASQPS.

In terms of domain architecture, PABS spans 9–238; the sequence is ETLHDQFGQY…GIMTFAWATD (230 aa). Q33 provides a ligand contact to S-methyl-5'-thioadenosine. Residues H64 and D88 each contribute to the spermidine site. S-methyl-5'-thioadenosine-binding positions include E108 and 140-141; that span reads DG. The active-site Proton acceptor is the D158. Position 158–161 (158–161) interacts with spermidine; that stretch reads DCTD. P165 contacts S-methyl-5'-thioadenosine.

This sequence belongs to the spermidine/spermine synthase family. Homodimer or homotetramer.

The protein resides in the cytoplasm. It carries out the reaction S-adenosyl 3-(methylsulfanyl)propylamine + putrescine = S-methyl-5'-thioadenosine + spermidine + H(+). Its pathway is amine and polyamine biosynthesis; spermidine biosynthesis; spermidine from putrescine: step 1/1. Catalyzes the irreversible transfer of a propylamine group from the amino donor S-adenosylmethioninamine (decarboxy-AdoMet) to putrescine (1,4-diaminobutane) to yield spermidine. The chain is Polyamine aminopropyltransferase from Escherichia coli (strain UTI89 / UPEC).